Here is a 429-residue protein sequence, read N- to C-terminus: 28S rRNA (cytosine-C(5))-methyltransferase (429 aa).

Residue Gly-2 is modified to N-acetylglycine. Position 167 is a phosphoserine (Ser-167). S-adenosyl-L-methionine-binding positions include 234–240, Asp-258, Arg-263, and Asp-305; that span reads CAAPGNK. Cys-359 (nucleophile) is an active-site residue.

This sequence belongs to the class I-like SAM-binding methyltransferase superfamily. RsmB/NOP family. Ubiquitous. Detected in placenta, heart and skeletal muscle.

It is found in the nucleus. It localises to the nucleolus. It catalyses the reaction cytidine(3782) in 28S rRNA + S-adenosyl-L-methionine = 5-methylcytidine(3782) in 28S rRNA + S-adenosyl-L-homocysteine + H(+). In terms of biological role, S-adenosyl-L-methionine-dependent methyltransferase that specifically methylates the C(5) position of cytosine 3782 (m5C3782) in 28S rRNA. m5C3782 promotes protein translation without affecting ribosome biogenesis and fidelity. Required for corpus callosum and cerebral cortex development. The sequence is that of 28S rRNA (cytosine-C(5))-methyltransferase from Homo sapiens (Human).